Consider the following 313-residue polypeptide: D-apiose import binding protein (313 aa).

The N-terminal stretch at 1–26 (MKLTRRLTLAAFASALALGTAMPAFA) is a signal peptide. D-apiofuranose-binding positions include Asn-39, 115-116 (DR), 162-164 (DTN), Arg-168, Asn-218, Asp-243, and Gln-263.

It belongs to the bacterial solute-binding protein 2 family.

The protein resides in the periplasm. In terms of biological role, part of an ABC transporter complex involved in D-apiose import. Binds D-apiose, D-ribose and D-ribulose. The chain is D-apiose import binding protein from Rhizobium etli (strain ATCC 51251 / DSM 11541 / JCM 21823 / NBRC 15573 / CFN 42).